The chain runs to 249 residues: Proteasome subunit alpha type-3 (249 aa).

Ser-2 carries the N-acetylserine modification. Residues Ser-214 and Ser-220 each carry the O-acetylserine modification. Lys-221 participates in a covalent cross-link: Glycyl lysine isopeptide (Lys-Gly) (interchain with G-Cter in ubiquitin).

It belongs to the peptidase T1A family. In terms of assembly, component of the 20S core complex of the 26S proteasome. The 26S proteasome is composed of a core protease (CP), known as the 20S proteasome, capped at one or both ends by the 19S regulatory particle (RP/PA700). The 20S proteasome core is composed of 28 subunits that are arranged in four stacked rings, resulting in a barrel-shaped structure. The two end rings are each formed by seven alpha subunits, and the two central rings are each formed by seven beta subunits. The catalytic chamber with the active sites is on the inside of the barrel. As to expression, ubiquitous low levels.

It localises to the cytoplasm. The protein localises to the nucleus. Its function is as follows. The proteasome is a multicatalytic proteinase complex which is characterized by its ability to cleave peptides with Arg, Phe, Tyr, Leu, and Glu adjacent to the leaving group at neutral or slightly basic pH. The proteasome has an ATP-dependent proteolytic activity. In Arabidopsis thaliana (Mouse-ear cress), this protein is Proteasome subunit alpha type-3 (PAG1).